Here is a 70-residue protein sequence, read N- to C-terminus: Gene 4.3 protein (70 aa).

The protein is Gene 4.3 protein (4.3) of Escherichia coli (Bacteriophage T3).